A 910-amino-acid chain; its full sequence is SWI/SNF-related matrix-associated actin-dependent regulator of chromatin subfamily A-like protein 1 (910 aa).

The interval Met1 to Ile170 is disordered. Ser2 is subject to N-acetylserine. Mediates interaction with RPA2 stretches follow at residues Ser2–Ala30 and Leu5–Ala30. Residues Leu3 to Leu28 adopt a coiled-coil conformation. Basic and acidic residues predominate over residues Glu7 to Trp29. 2 stretches are compositionally biased toward polar residues: residues Gln32–Leu54 and Ser70–Thr95. Over residues Glu97–Gly107 the composition is skewed to basic and acidic residues. At Ser117 the chain carries Phosphoserine. The span at Glu120–Ser131 shows a compositional bias: polar residues. Positions Phe150–Ala160 are enriched in basic and acidic residues. A Phosphoserine modification is found at Ser164. HARP domains follow at residues Lys198–Glu268 and Ser284–Pro355. The Helicase ATP-binding domain maps to Ser402–Thr557. Residue Asp415 to Thr422 coordinates ATP. The short motif at Asp506 to His509 is the DESH box element. Positions Arg601 to Met618 match the Nuclear localization signal motif. In terms of domain architecture, Helicase C-terminal spans Tyr672 to Ala825. Residues Gly865–Ser875 show a composition bias toward low complexity. The interval Gly865–Ser890 is disordered.

The protein belongs to the SNF2/RAD54 helicase family. SMARCAL1 subfamily. As to quaternary structure, interacts with RPA2; the interaction is direct and mediates the recruitment by the RPA complex of SMARCAL1 to sites of DNA damage. DNA damage-regulated phosphorylation by kinases that may include ATM, ATR and PRKDC.

Its subcellular location is the nucleus. It carries out the reaction ATP + H2O = ADP + phosphate + H(+). In terms of biological role, ATP-dependent annealing helicase that binds selectively to fork DNA relative to ssDNA or dsDNA and catalyzes the rewinding of the stably unwound DNA. Rewinds single-stranded DNA bubbles that are stably bound by replication protein A (RPA). Acts throughout the genome to reanneal stably unwound DNA, performing the opposite reaction of many enzymes, such as helicases and polymerases, that unwind DNA. May play an important role in DNA damage response by acting at stalled replication forks. The protein is SWI/SNF-related matrix-associated actin-dependent regulator of chromatin subfamily A-like protein 1 (Smarcal1) of Rattus norvegicus (Rat).